A 692-amino-acid chain; its full sequence is Elongation factor G (692 aa).

Residues 8–282 (ENTRNIGIMA…AVIDYLPSPL (275 aa)) form the tr-type G domain. Residues 17–24 (AHIDAGKT), 81–85 (DTPGH), and 135–138 (NKMD) contribute to the GTP site.

The protein belongs to the TRAFAC class translation factor GTPase superfamily. Classic translation factor GTPase family. EF-G/EF-2 subfamily.

The protein localises to the cytoplasm. Its function is as follows. Catalyzes the GTP-dependent ribosomal translocation step during translation elongation. During this step, the ribosome changes from the pre-translocational (PRE) to the post-translocational (POST) state as the newly formed A-site-bound peptidyl-tRNA and P-site-bound deacylated tRNA move to the P and E sites, respectively. Catalyzes the coordinated movement of the two tRNA molecules, the mRNA and conformational changes in the ribosome. In Bacillus anthracis (strain CDC 684 / NRRL 3495), this protein is Elongation factor G.